The following is a 359-amino-acid chain: Quinolinate synthase (359 aa).

The iminosuccinate site is built by H81 and S99. Position 144 (C144) interacts with [4Fe-4S] cluster. Residues 170–172 (YVN) and S187 each bind iminosuccinate. C229 is a binding site for [4Fe-4S] cluster. Residues 255–257 (HPE) and T272 contribute to the iminosuccinate site. C315 is a [4Fe-4S] cluster binding site.

This sequence belongs to the quinolinate synthase family. Type 2 subfamily. [4Fe-4S] cluster serves as cofactor.

It is found in the cytoplasm. It catalyses the reaction iminosuccinate + dihydroxyacetone phosphate = quinolinate + phosphate + 2 H2O + H(+). It functions in the pathway cofactor biosynthesis; NAD(+) biosynthesis; quinolinate from iminoaspartate: step 1/1. In terms of biological role, catalyzes the condensation of iminoaspartate with dihydroxyacetone phosphate to form quinolinate. This Sinorhizobium medicae (strain WSM419) (Ensifer medicae) protein is Quinolinate synthase.